We begin with the raw amino-acid sequence, 297 residues long: Mitochondrial substrate carrier family protein P (297 aa).

Solcar repeat units lie at residues 12-98 (KPSW…IKNH), 104-189 (SSSF…LKRI), and 201-293 (ISGT…LSNF). 6 helical membrane passes run 15-35 (WVSF…VAPL), 66-86 (GIKG…PYAA), 107-127 (FQIF…TYPL), 165-185 (IQPT…TFEF), 207-227 (LIAG…FDVV), and 262-282 (ILAL…TASI).

The protein belongs to the mitochondrial carrier (TC 2.A.29) family.

Its subcellular location is the mitochondrion inner membrane. Its function is as follows. Mitochondrial solute carriers shuttle metabolites, nucleotides, and cofactors through the mitochondrial inner membrane. Required for the accumulation of coenzyme A in the mitochondrial matrix. This Dictyostelium discoideum (Social amoeba) protein is Mitochondrial substrate carrier family protein P (mcfP).